We begin with the raw amino-acid sequence, 256 residues long: Thiazole synthase (256 aa).

Lysine 98 acts as the Schiff-base intermediate with DXP in catalysis. 1-deoxy-D-xylulose 5-phosphate is bound by residues glycine 159, 185 to 186, and 207 to 208; these read AG and NT.

Belongs to the ThiG family. As to quaternary structure, homotetramer. Forms heterodimers with either ThiH or ThiS.

Its subcellular location is the cytoplasm. It carries out the reaction [ThiS sulfur-carrier protein]-C-terminal-Gly-aminoethanethioate + 2-iminoacetate + 1-deoxy-D-xylulose 5-phosphate = [ThiS sulfur-carrier protein]-C-terminal Gly-Gly + 2-[(2R,5Z)-2-carboxy-4-methylthiazol-5(2H)-ylidene]ethyl phosphate + 2 H2O + H(+). The protein operates within cofactor biosynthesis; thiamine diphosphate biosynthesis. Its function is as follows. Catalyzes the rearrangement of 1-deoxy-D-xylulose 5-phosphate (DXP) to produce the thiazole phosphate moiety of thiamine. Sulfur is provided by the thiocarboxylate moiety of the carrier protein ThiS. In vitro, sulfur can be provided by H(2)S. The protein is Thiazole synthase (thiG) of Bacillus subtilis (strain 168).